Here is a 203-residue protein sequence, read N- to C-terminus: Nucleoside triphosphate pyrophosphatase (203 aa).

The Proton acceptor role is filled by aspartate 77.

It belongs to the Maf family. A divalent metal cation serves as cofactor.

It is found in the cytoplasm. The enzyme catalyses a ribonucleoside 5'-triphosphate + H2O = a ribonucleoside 5'-phosphate + diphosphate + H(+). It carries out the reaction a 2'-deoxyribonucleoside 5'-triphosphate + H2O = a 2'-deoxyribonucleoside 5'-phosphate + diphosphate + H(+). Nucleoside triphosphate pyrophosphatase. May have a dual role in cell division arrest and in preventing the incorporation of modified nucleotides into cellular nucleic acids. The sequence is that of Nucleoside triphosphate pyrophosphatase from Rickettsia felis (strain ATCC VR-1525 / URRWXCal2) (Rickettsia azadi).